The following is a 326-amino-acid chain: uncharacterized protein (326 aa).

Residues 293–326 (HRNYDANHSTSGEEENSGSRSRIAELSQSTIHRR) are disordered.

This is an uncharacterized protein from Oryza latifolia (Indian wild rice).